The chain runs to 444 residues: MEFKYLVFIVLCQYLDNTFFSETEAITTEQQSLSTLITPSLYVTTDSQNTAGNALSQTTRFKNISSGQQASPAQITPEQATPAVYVSSSPLTYNITRQAESAVNNSLPQTSPSGFTLTNQPSPSTYNSTGQPPKHLVYTSTQQPPSPAPTSSGKPEVESTHNQPTKSTPTIYLQRDTPPPPPPPLTSEPPSGKGTAHKNNHNAIAAILIGTIIISMLVAILMIILWKYLRKPVLNDQNWAGRSPFADGETPEMCMDNIRESEASTKRASVVSLMTWKPSKSTLLADDLEVKLFESSEHINDTSNLKTDNVEVQINGLSEDSADGSTVGTAVSSDDADLALPPPLLDLDENLPNKPTVTVVSPLPNDSINPQPSPDGLNQVCEEQHSKIQEPFPPPPDSFNVPLSAGDFINNQESAHEAQCQEFSTPDLHPDLTDSLPPPPTELL.

Positions Met1–Thr23 are cleaved as a signal peptide. At Glu24 to Ala203 the chain is on the extracellular side. Asn63, Asn94, Asn104, and Asn127 each carry an N-linked (GlcNAc...) asparagine glycan. 2 stretches are compositionally biased toward polar residues: residues Asn104–Gln131 and Thr160–Ile171. The tract at residues Asn104–His197 is disordered. Residues Thr177–Ser187 are compositionally biased toward pro residues. A helical transmembrane segment spans residues Ile204 to Ile224. Residues Leu225–Leu444 lie on the Cytoplasmic side of the membrane. At Thr250 the chain carries Phosphothreonine. Ser269, Ser272, Ser279, and Ser295 each carry phosphoserine. Polar residues-rich tracts occupy residues Ser318 to Ser332 and Ser361 to Pro370. Disordered regions lie at residues Ser318–Asp337 and Ser361–Leu444.

As to expression, expressed in myeloid and lymphoid progenitors and increased in mature hematopoietic populations with the highest levels in granulocytes.

The protein localises to the membrane. Its function is as follows. Required for granulocyte differentiation and functionality of hematopoietic progenitor cells through the control of cell cycle progression and survival of hematopoietic progenitor cells. The protein is Protein EVI2B of Mus musculus (Mouse).